A 750-amino-acid chain; its full sequence is MIIRSPESEVKIMVDRDPIKTSFEEWARPGHFSRTIAKGPDTTTWIWNLHADAHDFDSHTSDLEEISRKVFSAHFGQLSIIFLWLSGMYFHGARFSNYEAWLSDPTHIGPSAQVVWPIVGQEILNGDVGGGFRGIQITSGFFQLWRASGITNELQLYCTAIGALVFAALMLFAGWFHYHKAAPKLAWFQDVESMLNHHLAGLLGLGSLSWAGHQVHVSLPINQFLDAGVDPKEIPLPHEFILNRDLLAQLYPSFAEGATPFFTLNWSKYADFLSFRGGLDPVTGGLWLTDIAHHHLAIAILFLVAGHMYKTNWGIGHSLKDILEAHKGPFTGQGHKGLYEILTTSWHAQLSLNLAMLGSSTIVVAHHMYSMPPYPYLAIDYGTQLSLFTHHMWIGGFLIVGAAAHAAIFMVRDYDPTTRYNDLLDRVLRHRDAIISHLNWACIFLGFHSFGLYIHNDTMSALGRPQDMFSDTAIQLQPIFAQWVQNTHALAPSATAPGATASTSLTWGGGDLVAVGGKVALLPIPLGTADFLVHHIHAFTIHVTVLILLKGVLFARSSRLIPDKANLGFRFPCDGPGRGGTCQVSAWDHVFLGLFWMYNAISVVIFHFSWKMQSDVWGSISDQGVVTHITGGNFAQSSITINGWLRDFLWAQASQVIQSYGSSLSAYGLFFLGAHFVWAFSLMFLFSGRGYWQELIESIVWAHNKLKVAPATQPRALSIVQGRAVGVTHYLLGGIATTWAFFLARIIAVG.

The next 8 membrane-spanning stretches (helical) occupy residues 70–93, 156–179, 195–219, 291–309, 346–369, 385–411, 433–455, and 531–549; these read VFSA…FHGA, LYCT…FHYH, LNHH…HVSL, IAHH…GHMY, WHAQ…HHMY, LSLF…IFMV, AIIS…LYIH, and FLVH…LILL. Positions 573 and 582 each coordinate [4Fe-4S] cluster. 2 helical membrane-spanning segments follow: residues 589-610 and 664-686; these read HVFL…HFSW and LSAY…MFLF. A chlorophyll a'-binding site is contributed by H675. The chlorophyll a site is built by M683 and Y691. W692 is a phylloquinone binding site. The chain crosses the membrane as a helical span at residues 724–744; it reads AVGVTHYLLGGIATTWAFFLA.

It belongs to the PsaA/PsaB family. As to quaternary structure, the PsaA/B heterodimer binds the P700 chlorophyll special pair and subsequent electron acceptors. PSI consists of a core antenna complex that captures photons, and an electron transfer chain that converts photonic excitation into a charge separation. The eukaryotic PSI reaction center is composed of at least 11 subunits. P700 is a chlorophyll a/chlorophyll a' dimer, A0 is one or more chlorophyll a, A1 is one or both phylloquinones and FX is a shared 4Fe-4S iron-sulfur center. is required as a cofactor.

The protein localises to the plastid. Its subcellular location is the chloroplast thylakoid membrane. The enzyme catalyses reduced [plastocyanin] + hnu + oxidized [2Fe-2S]-[ferredoxin] = oxidized [plastocyanin] + reduced [2Fe-2S]-[ferredoxin]. In terms of biological role, psaA and PsaB bind P700, the primary electron donor of photosystem I (PSI), as well as the electron acceptors A0, A1 and FX. PSI is a plastocyanin-ferredoxin oxidoreductase, converting photonic excitation into a charge separation, which transfers an electron from the donor P700 chlorophyll pair to the spectroscopically characterized acceptors A0, A1, FX, FA and FB in turn. Oxidized P700 is reduced on the lumenal side of the thylakoid membrane by plastocyanin. This Calycanthus floridus var. glaucus (Eastern sweetshrub) protein is Photosystem I P700 chlorophyll a apoprotein A1.